Here is an 86-residue protein sequence, read N- to C-terminus: U15-lycotoxin-Ls1a (86 aa).

The signal sequence occupies residues 1 to 20 (MNSKIFAVLFLLAFLSCVLS). In terms of domain architecture, WAP spans 21 to 66 (DQYCPKSSITACKKMNIRNDCCKDDDCTGGSWCCATPCGNFCKYPT). Intrachain disulfides connect cysteine 24–cysteine 54, cysteine 32–cysteine 58, cysteine 41–cysteine 53, cysteine 42–cysteine 80, and cysteine 47–cysteine 62.

This sequence belongs to the venom protein 11 family. 01 (wap-1) subfamily. Contains 5 disulfide bonds. In terms of tissue distribution, expressed by the venom gland.

The protein resides in the secreted. Its function is as follows. Has antibacterial activity. This Lycosa singoriensis (Wolf spider) protein is U15-lycotoxin-Ls1a.